A 460-amino-acid chain; its full sequence is UDP-N-acetylmuramoylalanine--D-glutamate ligase (460 aa).

120-126 is a binding site for ATP; the sequence is GSNGKTT.

This sequence belongs to the MurCDEF family.

The protein localises to the cytoplasm. The enzyme catalyses UDP-N-acetyl-alpha-D-muramoyl-L-alanine + D-glutamate + ATP = UDP-N-acetyl-alpha-D-muramoyl-L-alanyl-D-glutamate + ADP + phosphate + H(+). The protein operates within cell wall biogenesis; peptidoglycan biosynthesis. Cell wall formation. Catalyzes the addition of glutamate to the nucleotide precursor UDP-N-acetylmuramoyl-L-alanine (UMA). The chain is UDP-N-acetylmuramoylalanine--D-glutamate ligase from Lactobacillus gasseri (strain ATCC 33323 / DSM 20243 / BCRC 14619 / CIP 102991 / JCM 1131 / KCTC 3163 / NCIMB 11718 / NCTC 13722 / AM63).